We begin with the raw amino-acid sequence, 407 residues long: WEB family protein At3g51720 (407 aa).

Coiled coils occupy residues 72 to 99 (KVLKSLESTKAIVEELKSKIQNKEDKEN), 128 to 217 (SVGL…ARAA), and 247 to 278 (EEILETIDETAREIRSSRRTLEEGLAKMEAEE).

The protein belongs to the WEB family.

This chain is WEB family protein At3g51720, found in Arabidopsis thaliana (Mouse-ear cress).